A 247-amino-acid chain; its full sequence is ATP synthase subunit a, chloroplastic (247 aa).

Transmembrane regions (helical) follow at residues 38-58 (QVLITSWVVIAILLISTILVV), 95-115 (VPFIGTLFLFIFVSNWSGALL), 134-154 (INTTVALALLTSVAYFYAGIS), 199-219 (LVVVVLVSLVPLVVPIPVMFL), and 220-240 (GLFTSGIQALIFATLAAAYIG).

Belongs to the ATPase A chain family. F-type ATPases have 2 components, CF(1) - the catalytic core - and CF(0) - the membrane proton channel. CF(1) has five subunits: alpha(3), beta(3), gamma(1), delta(1), epsilon(1). CF(0) has four main subunits: a, b, b' and c.

The protein localises to the plastid. The protein resides in the chloroplast thylakoid membrane. Its function is as follows. Key component of the proton channel; it plays a direct role in the translocation of protons across the membrane. The sequence is that of ATP synthase subunit a, chloroplastic from Pisum sativum (Garden pea).